The primary structure comprises 279 residues: Release factor glutamine methyltransferase (279 aa).

2 residues coordinate S-adenosyl-L-methionine: Glu-141 and Asn-187. 187–190 (NPPY) lines the substrate pocket.

This sequence belongs to the protein N5-glutamine methyltransferase family. PrmC subfamily.

It catalyses the reaction L-glutaminyl-[peptide chain release factor] + S-adenosyl-L-methionine = N(5)-methyl-L-glutaminyl-[peptide chain release factor] + S-adenosyl-L-homocysteine + H(+). Its function is as follows. Methylates the class 1 translation termination release factors RF1/PrfA and RF2/PrfB on the glutamine residue of the universally conserved GGQ motif. The protein is Release factor glutamine methyltransferase of Corynebacterium glutamicum (strain ATCC 13032 / DSM 20300 / JCM 1318 / BCRC 11384 / CCUG 27702 / LMG 3730 / NBRC 12168 / NCIMB 10025 / NRRL B-2784 / 534).